Reading from the N-terminus, the 251-residue chain is Imidazole glycerol phosphate synthase subunit HisF (251 aa).

Catalysis depends on residues aspartate 11 and aspartate 130.

The protein belongs to the HisA/HisF family. As to quaternary structure, heterodimer of HisH and HisF.

It is found in the cytoplasm. The enzyme catalyses 5-[(5-phospho-1-deoxy-D-ribulos-1-ylimino)methylamino]-1-(5-phospho-beta-D-ribosyl)imidazole-4-carboxamide + L-glutamine = D-erythro-1-(imidazol-4-yl)glycerol 3-phosphate + 5-amino-1-(5-phospho-beta-D-ribosyl)imidazole-4-carboxamide + L-glutamate + H(+). It functions in the pathway amino-acid biosynthesis; L-histidine biosynthesis; L-histidine from 5-phospho-alpha-D-ribose 1-diphosphate: step 5/9. Its function is as follows. IGPS catalyzes the conversion of PRFAR and glutamine to IGP, AICAR and glutamate. The HisF subunit catalyzes the cyclization activity that produces IGP and AICAR from PRFAR using the ammonia provided by the HisH subunit. In Chlorobium phaeobacteroides (strain BS1), this protein is Imidazole glycerol phosphate synthase subunit HisF.